We begin with the raw amino-acid sequence, 334 residues long: Phosphatidylglycerol--prolipoprotein diacylglyceryl transferase (334 aa).

The next 4 helical transmembrane spans lie at 22 to 42 (FLPF…VVAA), 54 to 74 (AEPG…IIGA), 105 to 125 (IWEG…GVGI), and 131 to 151 (GLRF…AQAI). An a 1,2-diacyl-sn-glycero-3-phospho-(1'-sn-glycerol)-binding site is contributed by Arg-153. Transmembrane regions (helical) follow at residues 191–211 (LFQP…FVIL) and 251–271 (FLGI…GAII). The disordered stretch occupies residues 296–334 (PQAEVESGETDPEEILHADDDEERTGTHKPQATSLSGSN). The segment covering 301-318 (ESGETDPEEILHADDDEE) has biased composition (acidic residues). Polar residues predominate over residues 323-334 (HKPQATSLSGSN).

The protein belongs to the Lgt family.

Its subcellular location is the cell membrane. It catalyses the reaction L-cysteinyl-[prolipoprotein] + a 1,2-diacyl-sn-glycero-3-phospho-(1'-sn-glycerol) = an S-1,2-diacyl-sn-glyceryl-L-cysteinyl-[prolipoprotein] + sn-glycerol 1-phosphate + H(+). It functions in the pathway protein modification; lipoprotein biosynthesis (diacylglyceryl transfer). Catalyzes the transfer of the diacylglyceryl group from phosphatidylglycerol to the sulfhydryl group of the N-terminal cysteine of a prolipoprotein, the first step in the formation of mature lipoproteins. The protein is Phosphatidylglycerol--prolipoprotein diacylglyceryl transferase of Leifsonia xyli subsp. xyli (strain CTCB07).